Here is a 95-residue protein sequence, read N- to C-terminus: Protein ECS1 (95 aa).

Positions 1-27 are cleaved as a signal peptide; it reads MASSIVSSMFLFLLLLLVFPHIDNVLG.

As to expression, expressed in leaves, flowers and stems, but not in roots.

The protein localises to the secreted. It localises to the cell wall. Maybe involved in defense responses to X.campestris, but probably not a X.campestris pv. campestris race 750 (e.g. Xcc750) resistance gene; according to genetic data, linked to a locus influencing resistance to Xcc750. This Arabidopsis thaliana (Mouse-ear cress) protein is Protein ECS1.